The chain runs to 794 residues: E3 ubiquitin-protein ligase wwp-1 (794 aa).

The segment covering 1-16 (MARNEPSSQQPSSSGS) has biased composition (low complexity). Disordered stretches follow at residues 1–31 (MARNEPSSQQPSSSGSNGTPAQQNGSAKPSK) and 155–198 (RSAG…AAPT). The 115-residue stretch at 10-124 (QPSSSGSNGT…TRNENGEFKN (115 aa)) folds into the C2 domain. Over residues 17–27 (NGTPAQQNGSA) the composition is skewed to polar residues. Residues 161–186 (AETAASASSEASTSNGVATSSSARRP) show a composition bias toward low complexity. WW domains lie at 219–252 (EQLPDGWEMRFDQYGRKYYVDHTTKSTTWERPST), 253–286 (QPLPQGWEMRRDPRGRVYYVDHNTRTTTWQRPTA), 324–358 (GPLPEGWEKRQDPNTSRMYFVNHVNRTTQWEDPRT), and 366–399 (QPLPDGWEMRFTEQGVPFFIDHQSKTTTYNDPRT). The HECT domain occupies 460-794 (NAVDLRRRLY…IEMTEGFGNE (335 aa)). Residue cysteine 762 is the Glycyl thioester intermediate of the active site.

In terms of assembly, interacts (via WW domains) with Kruppel-like factor klf-1. Interacts with ubiquitin-conjugating enzyme E2 ubc-18. As to expression, expressed in neurons localized in the head and tail of adults.

The enzyme catalyses S-ubiquitinyl-[E2 ubiquitin-conjugating enzyme]-L-cysteine + [acceptor protein]-L-lysine = [E2 ubiquitin-conjugating enzyme]-L-cysteine + N(6)-ubiquitinyl-[acceptor protein]-L-lysine.. The protein operates within protein modification; protein ubiquitination. Its function is as follows. E3 ubiquitin-protein ligase which accepts ubiquitin from an E2 ubiquitin-conjugating enzyme in the form of a thioester and then directly transfers the ubiquitin to targeted substrates. Ubiquitinates klf-1. Required for diet restriction-mediated lifespan extension, acting in concert with Kruppel-like factor klf-1 in the intestine to perhaps modulate genes involved in lipid metabolism. Probably acting downstream of the Insulin/IGF-1-like signaling (IIS) mediated pathway, plays a role in the immune response to infection by the Gram-negative bacterium P.aeruginosa, at least partly in response to bacterial pore-forming toxins. The sequence is that of E3 ubiquitin-protein ligase wwp-1 from Caenorhabditis elegans.